A 100-amino-acid polypeptide reads, in one-letter code: Putative PIN1-like protein (100 aa).

Residues 1–15 (MADEEKLPPGWEKRM) are compositionally biased toward basic and acidic residues. 2 disordered regions span residues 1-52 (MADE…QGEP) and 69-100 (LDLA…REGL). Positions 5 to 38 (EKLPPGWEKRMSRPSGRGYYFNHITNPSQWERPS) constitute a WW domain. The segment covering 27–44 (HITNPSQWERPSGNSSSG) has biased composition (polar residues). Residues 87–100 (QRLHPEDQGRREGL) show a composition bias toward basic and acidic residues.

The protein is Putative PIN1-like protein (PIN1P1) of Homo sapiens (Human).